We begin with the raw amino-acid sequence, 29 residues long: Kappa-sparatoxin-Hv1e (29 aa).

3 cysteine pairs are disulfide-bonded: C3–C17, C10–C22, and C16–C26.

In terms of tissue distribution, expressed by the venom gland.

It is found in the secreted. Functionally, inhibitor of voltage-gated potassium channels of the Kv4/KCND family. Blocks calcium channels (Cav). This is Kappa-sparatoxin-Hv1e from Heteropoda venatoria (Brown huntsman spider).